We begin with the raw amino-acid sequence, 930 residues long: Protein translocase subunit SecA (930 aa).

Residues Gln87, 105–109 (GEGKT), and Asp515 contribute to the ATP site. Zn(2+)-binding residues include Cys914, Cys916, Cys925, and His926.

It belongs to the SecA family. Monomer and homodimer. Part of the essential Sec protein translocation apparatus which comprises SecA, SecYEG and auxiliary proteins SecDF-YajC and YidC. It depends on Zn(2+) as a cofactor.

It is found in the cell inner membrane. The protein resides in the cytoplasm. The enzyme catalyses ATP + H2O + cellular proteinSide 1 = ADP + phosphate + cellular proteinSide 2.. In terms of biological role, part of the Sec protein translocase complex. Interacts with the SecYEG preprotein conducting channel. Has a central role in coupling the hydrolysis of ATP to the transfer of proteins into and across the cell membrane, serving both as a receptor for the preprotein-SecB complex and as an ATP-driven molecular motor driving the stepwise translocation of polypeptide chains across the membrane. In Cupriavidus metallidurans (strain ATCC 43123 / DSM 2839 / NBRC 102507 / CH34) (Ralstonia metallidurans), this protein is Protein translocase subunit SecA.